Reading from the N-terminus, the 357-residue chain is Glutamine synthetase cytosolic isozyme 1-2 (357 aa).

The GS beta-grasp domain maps to 19 to 99 (IIAEYIWVGG…VMCDCYTPQG (81 aa)). One can recognise a GS catalytic domain in the interval 106-357 (KRHSAAKIFS…AETTLLWKQN (252 aa)).

The protein belongs to the glutamine synthetase family. In terms of assembly, homooctamer. As to expression, expressed in roots and at lower levels in leaf blades and spikelets (rice flower).

It localises to the cytoplasm. The catalysed reaction is L-glutamate + NH4(+) + ATP = L-glutamine + ADP + phosphate + H(+). In terms of biological role, high-affinity glutamine synthetase involved in ammonium assimilation. Plays an important role in the primary assimilation of ammonium taken up by roots. Plays a role in maintaining nitrogen metabolic balance during ammonium assimilation, thus controlling plant growth and development. Reassimilates ammonium generated during lignification within developing tillers, which is probably required for the outgrowth of axillary buds. Required for nitrogen-dependent biosynthesis of cytokinin. Active cytokinin in axillary bud meristem is required for axillary bud outgrowth and necessary for tillering. The sequence is that of Glutamine synthetase cytosolic isozyme 1-2 from Oryza sativa subsp. japonica (Rice).